The chain runs to 972 residues: Optomotor-blind protein (972 aa).

Disordered regions lie at residues 44–248 (SLLT…YFPA), 263–286 (PGLY…HAHH), 508–563 (AKGF…HPHA), 645–676 (ADVE…TGSP), 805–889 (AVTP…PSEL), and 918–972 (EEAA…GTDQ). Composition is skewed to low complexity over residues 49–80 (GSNN…NTNN) and 97–142 (SNHS…NNTS). The span at 155–176 (PPSPAGTPPPTIVGLPPIPPPN) shows a compositional bias: pro residues. Low complexity-rich tracts occupy residues 177–193 (NNSS…AAAH) and 201–212 (AHHSPSTGAAAP). The segment covering 213 to 225 (PAGPTGLPPPTPP) has biased composition (pro residues). A compositionally biased stretch (low complexity) spans 226-237 (HHLQQQQQQQQH). The span at 274-286 (PPHHPGAHPHAHH) shows a compositional bias: basic residues. The T-box DNA-binding region spans 332–513 (LEGKDLWEKF…NNPFAKGFRD (182 aa)). Residues 818–831 (PPGGGGGGLGGGVV) are compositionally biased toward gly residues. Over residues 835–851 (PRSLSSSPRPRPASHSP) the composition is skewed to low complexity. Ser-887 bears the Phosphoserine mark. Residues 952–963 (HPHHQTHLHSHH) show a composition bias toward basic residues.

As to expression, in third-instar larvae, expressed in the brain region that will develop into optic lobes and more weakly in the thoracic part of the ventral ganglion.

It localises to the nucleus. Functionally, essential protein that may function as a transcription regulator. Vital for pupal development. Required for proper development of the optic lobes and wings, and abdominal pigmentation. In Drosophila melanogaster (Fruit fly), this protein is Optomotor-blind protein (bi).